The primary structure comprises 479 residues: ATP-dependent protease ATPase subunit HslU (479 aa).

ATP-binding positions include Ile-32, Gly-74 to Glu-79, Asp-290, Glu-355, and Arg-427.

This sequence belongs to the ClpX chaperone family. HslU subfamily. As to quaternary structure, a double ring-shaped homohexamer of HslV is capped on each side by a ring-shaped HslU homohexamer. The assembly of the HslU/HslV complex is dependent on binding of ATP.

It is found in the cytoplasm. In terms of biological role, ATPase subunit of a proteasome-like degradation complex; this subunit has chaperone activity. The binding of ATP and its subsequent hydrolysis by HslU are essential for unfolding of protein substrates subsequently hydrolyzed by HslV. HslU recognizes the N-terminal part of its protein substrates and unfolds these before they are guided to HslV for hydrolysis. In Leptospira interrogans serogroup Icterohaemorrhagiae serovar copenhageni (strain Fiocruz L1-130), this protein is ATP-dependent protease ATPase subunit HslU.